Reading from the N-terminus, the 31-residue chain is Photosystem II reaction center protein T (31 aa).

A helical membrane pass occupies residues 3–23 (AFSYVLILTLALVTLFFAVAF).

The protein belongs to the PsbT family. As to quaternary structure, PSII is composed of 1 copy each of membrane proteins PsbA, PsbB, PsbC, PsbD, PsbE, PsbF, PsbH, PsbI, PsbJ, PsbK, PsbL, PsbM, PsbT, PsbX, PsbY, Psb30/Ycf12, peripheral proteins PsbO, CyanoQ (PsbQ), PsbU, PsbV and a large number of cofactors. It forms dimeric complexes.

The protein localises to the cellular thylakoid membrane. Found at the monomer-monomer interface of the photosystem II (PS II) dimer, plays a role in assembly and dimerization of PSII. PSII is a light-driven water plastoquinone oxidoreductase, using light energy to abstract electrons from H(2)O, generating a proton gradient subsequently used for ATP formation. The sequence is that of Photosystem II reaction center protein T from Prochlorococcus marinus (strain NATL2A).